A 490-amino-acid polypeptide reads, in one-letter code: UDP-glycosyltransferase 86A1 (490 aa).

UDP-alpha-D-glucose contacts are provided by residues serine 294, 352 to 354 (CCQ), 369 to 377 (HCGWNSILE), and 391 to 394 (LTDQ).

It belongs to the UDP-glycosyltransferase family.

This is UDP-glycosyltransferase 86A1 (UGT86A1) from Arabidopsis thaliana (Mouse-ear cress).